Consider the following 392-residue polypeptide: uncharacterized protein (392 aa).

Belongs to the glycosyltransferase group 1 family. Glycosyltransferase 4 subfamily.

This is an uncharacterized protein from Methanocaldococcus jannaschii (strain ATCC 43067 / DSM 2661 / JAL-1 / JCM 10045 / NBRC 100440) (Methanococcus jannaschii).